A 234-amino-acid chain; its full sequence is Synaptogyrin-1 (234 aa).

Met1 carries the post-translational modification N-acetylmethionine. Over 1–23 the chain is Cytoplasmic; that stretch reads MEGGAYGAGKAGGAFDPYTLVRQ. The MARVEL domain occupies 20–173; sequence LVRQPHTILR…QAVLAFQRYQ (154 aa). The chain crosses the membrane as a helical span at residues 24–44; that stretch reads PHTILRVVSWVFSIVVFGSIV. The Lumenal portion of the chain corresponds to 45–71; it reads NEGYLNNPEEEEEFCIYNRNPNACSYG. Residues 72–92 traverse the membrane as a helical segment; that stretch reads VTVGVLAFLTCLLYLALDVYF. Topologically, residues 93-103 are cytoplasmic; it reads PQISSVKDRKK. Residues 104 to 124 form a helical membrane-spanning segment; it reads AVLSDIGVSAFWAFFWFVGFC. The Lumenal segment spans residues 125–148; sequence FLANQWQVSKPKDNPLNEGTDAAR. Residues 149–169 traverse the membrane as a helical segment; it reads AAIAFSFFSIFTWAGQAVLAF. Topologically, residues 170-234 are cytoplasmic; the sequence is QRYQIGADSA…EPQGYQSQGY (65 aa). Residues 201 to 234 are disordered; it reads EPSAGSDPAGMGGTYQHPANAFDAEPQGYQSQGY.

The protein belongs to the synaptogyrin family.

The protein localises to the cytoplasmic vesicle. The protein resides in the secretory vesicle. It is found in the synaptic vesicle membrane. It localises to the melanosome. Its function is as follows. May play a role in regulated exocytosis. Modulates the localization of synaptophysin/SYP into synaptic-like microvesicles and may therefore play a role in synaptic-like microvesicle formation and/or maturation. Involved in the regulation of short-term and long-term synaptic plasticity. The protein is Synaptogyrin-1 of Mus musculus (Mouse).